The following is a 214-amino-acid chain: Peroxiredoxin 2 (214 aa).

A Thioredoxin domain is found at 1–157; the sequence is MKLYQKFPET…LLRITKAMIV (157 aa). The active-site Cysteine sulfenic acid (-SOH) intermediate is cysteine 45. Residue arginine 120 coordinates substrate.

It belongs to the peroxiredoxin family. Prx6 subfamily. Homodecamer. Pentamer of dimers that assemble into a ring structure.

It localises to the cytoplasm. It catalyses the reaction a hydroperoxide + [thioredoxin]-dithiol = an alcohol + [thioredoxin]-disulfide + H2O. Its function is as follows. Thiol-specific peroxidase that catalyzes the reduction of hydrogen peroxide and organic hydroperoxides to water and alcohols, respectively. Plays a role in cell protection against oxidative stress by detoxifying peroxides. The chain is Peroxiredoxin 2 from Sulfuracidifex metallicus (Sulfolobus metallicus).